Consider the following 697-residue polypeptide: U-box domain-containing protein 18 (697 aa).

Residues 23–210 (SISIVTLLDS…INRILDHVGI (188 aa)) are U-box N-terminal domain (UND) required for EXO70B1 binding and crucial for the negative regulation of ABA-dependent stomatal movement. One can recognise a U-box domain in the interval 287-361 (LKVEDLLCPI…RKHCKTNGIV (75 aa)). ARM repeat units follow at residues 420–459 (SFNR…NLSK), 461–500 (VTGK…YLSS), 502–544 (EDYS…GLLM), 546–587 (SDNH…KLAE), 589–631 (PDGT…NLCL), and 657–696 (NGEY…FVHA).

As to quaternary structure, interacts with EXO70B1 via its U-box N-terminal domain (UND).

It is found in the endomembrane system. It carries out the reaction S-ubiquitinyl-[E2 ubiquitin-conjugating enzyme]-L-cysteine + [acceptor protein]-L-lysine = [E2 ubiquitin-conjugating enzyme]-L-cysteine + N(6)-ubiquitinyl-[acceptor protein]-L-lysine.. It functions in the pathway protein modification; protein ubiquitination. Its function is as follows. Functions as an E3 ubiquitin ligase. Mediates EXO70B1 ubiquitination. Involved in the regulation of abscisic acid (ABA)-mediated stomatal movements. The sequence is that of U-box domain-containing protein 18 from Arabidopsis thaliana (Mouse-ear cress).